The primary structure comprises 581 residues: Kelch-like protein 30 (581 aa).

The BTB domain occupies 33–100 (ADVTLLVGDQ…VYTGRLTITQ (68 aa)). Residues 135–237 (CLGICEFGEQ…PRPCVQQLLA (103 aa)) form the BACK domain. 6 Kelch repeats span residues 280 to 327 (EEDE…ALNS), 328 to 378 (DVYV…ALNG), 379 to 423 (EIYA…GCQG), 425 to 472 (LYLV…ALNG), 474 to 514 (LYLI…PLGD), and 515 to 564 (LLYV…TIFL).

In Mus musculus (Mouse), this protein is Kelch-like protein 30 (Klhl30).